Here is a 241-residue protein sequence, read N- to C-terminus: Leucyl/phenylalanyl-tRNA--protein transferase (241 aa).

It belongs to the L/F-transferase family.

It is found in the cytoplasm. The enzyme catalyses N-terminal L-lysyl-[protein] + L-leucyl-tRNA(Leu) = N-terminal L-leucyl-L-lysyl-[protein] + tRNA(Leu) + H(+). It catalyses the reaction N-terminal L-arginyl-[protein] + L-leucyl-tRNA(Leu) = N-terminal L-leucyl-L-arginyl-[protein] + tRNA(Leu) + H(+). The catalysed reaction is L-phenylalanyl-tRNA(Phe) + an N-terminal L-alpha-aminoacyl-[protein] = an N-terminal L-phenylalanyl-L-alpha-aminoacyl-[protein] + tRNA(Phe). Functionally, functions in the N-end rule pathway of protein degradation where it conjugates Leu, Phe and, less efficiently, Met from aminoacyl-tRNAs to the N-termini of proteins containing an N-terminal arginine or lysine. This chain is Leucyl/phenylalanyl-tRNA--protein transferase, found in Neisseria meningitidis serogroup C / serotype 2a (strain ATCC 700532 / DSM 15464 / FAM18).